We begin with the raw amino-acid sequence, 551 residues long: Solute carrier family 22 member 3 (551 aa).

The chain crosses the membrane as a helical span at residues 21–41; the sequence is VFLLLCLTGVTFAFLFVGVVF. Asn-72, Asn-99, and Asn-114 each carry an N-linked (GlcNAc...) asparagine glycan. A helical membrane pass occupies residues 177 to 197; that stretch reads LIVYLISCFGVGITGVVVAFA. N-linked (GlcNAc...) asparagine glycosylation occurs at Asn-199. The next 2 membrane-spanning stretches (helical) occupy residues 236–256 and 264–284; these read IVGI…PGIA and GIQL…WVVP. The Proline-rich sequence motif lies at 284–288; sequence PESPR. Asn-317 is a glycosylation site (N-linked (GlcNAc...) asparagine). The next 3 helical transmembrane spans lie at 376–396, 463–483, and 493–513; these read MDFF…LLTI, FGVS…PFLL, and LPLI…MLLP.

It belongs to the major facilitator (TC 2.A.1) superfamily. Organic cation transporter (TC 2.A.1.19) family. Highly expressed in placenta. Expressed in intestine, hear, kidney and lung. Widely expressed in brain, particularly in hippocampus, cerebellum, cerebral cortex. In the brain, expressed predominantly in regions located at the brain-cerebrospinal fluid border, with expression extending to regions that belong to monoaminergic pathways such as raphe nuclei, striatum and thalamus. In brain, expressed in neurons and glial cells of amygdala. Expression is low in kidney and lung and undetectable in liver. Expressed in Sertoli cells in testis. Expressed in tracheal and bronchial epithelium of the respiratory tract, where it localizes to the apical membrane of ciliated and brush cells, and in basal cells.

It is found in the cell membrane. Its subcellular location is the apical cell membrane. The protein resides in the basolateral cell membrane. It localises to the mitochondrion membrane. The protein localises to the endomembrane system. It is found in the nucleus membrane. Its subcellular location is the nucleus outer membrane. It carries out the reaction (R)-noradrenaline(out) = (R)-noradrenaline(in). The catalysed reaction is (R)-adrenaline(out) = (R)-adrenaline(in). The enzyme catalyses serotonin(out) = serotonin(in). It catalyses the reaction dopamine(out) = dopamine(in). It carries out the reaction histamine(out) = histamine(in). The catalysed reaction is tyramine(in) = tyramine(out). The enzyme catalyses guanidine(out) = guanidine(in). It catalyses the reaction agmatine(out) = agmatine(in). It carries out the reaction spermidine(in) = spermidine(out). The catalysed reaction is L-histidyl-L-proline diketopiperazine(in) = L-histidyl-L-proline diketopiperazine(out). The enzyme catalyses (R)-salsolinol(in) = (R)-salsolinol(out). Electrogenic voltage-dependent transporter that mediates the transport of a variety of organic cations such as endogenous bioactive amines, cationic drugs and xenobiotics. Cation cellular uptake or release is driven by the electrochemical potential, i.e. membrane potential and concentration gradient. Functions as a Na(+)- and Cl(-)-independent, bidirectional uniporter. Implicated in neuronal monoamine neurotransmitters cellular uptake such as dopamine, adrenaline/epinephrine, noradrenaline/norepinephrine, histamine, serotonin and tyramine, thereby supporting a role in homeostatic regulation of aminergic neurotransmission in the brain. Transports dopaminergic neuromodulators cyclo(his-pro) and salsolinol with low efficiency. May be involved in the uptake and disposition of cationic compounds by renal clearance from the blood flow. May contribute to regulate the transport of cationic compounds in testis across the blood-testis-barrier. Mediates the transport of polyamine spermidine and putrescine. Mediates the bidirectional transport of polyamine agmatine. Also transports guanidine. May also mediate intracellular transport of organic cations, thereby playing a role in amine metabolism and intracellular signaling. This chain is Solute carrier family 22 member 3, found in Rattus norvegicus (Rat).